The sequence spans 203 residues: GTP-binding protein ypt1 (203 aa).

Residues 15–23 (GDSGVGKSC), 33–40 (YTESYIST), 63–67 (DTAGQ), 121–124 (NKSD), and 151–153 (SAK) each bind GTP. The Effector region motif lies at 37–45 (YISTIGVDF). Residues 180–203 (NNTKASVNVSPGHGVSNNSSGGCC) form a disordered region. Residues Cys202 and Cys203 are each lipidated (S-geranylgeranyl cysteine).

This sequence belongs to the small GTPase superfamily. Rab family.

It is found in the endoplasmic reticulum membrane. It localises to the golgi apparatus membrane. The protein resides in the cytoplasm. Its subcellular location is the preautophagosomal structure membrane. Its activity is regulated as follows. Rab activation is generally mediated by a guanine exchange factor (GEF), while inactivation through hydrolysis of bound GTP is catalyzed by a GTPase activating protein (GAP). In terms of biological role, the small GTPases Rab are key regulators of intracellular membrane trafficking, from the formation of transport vesicles to their fusion with membranes. Rabs cycle between an inactive GDP-bound form and an active GTP-bound form that is able to recruit to membranes different set of downstream effectors directly responsible for vesicle formation, movement, tethering and fusion. Ypt-1 regulates the trafficking of secretory vesicles from the endoplasmic reticulum (ER) to the Golgi. Plays a role in the initial events of the autophagic vacuole development which take place at specialized regions of the endoplasmic reticulum. Also involved in the recycling of membrane proteins. The chain is GTP-binding protein ypt1 (ypt-1) from Neurospora crassa (strain ATCC 24698 / 74-OR23-1A / CBS 708.71 / DSM 1257 / FGSC 987).